We begin with the raw amino-acid sequence, 382 residues long: UDP-N-acetylglucosamine--N-acetylmuramyl-(pentapeptide) pyrophosphoryl-undecaprenol N-acetylglucosamine transferase (382 aa).

UDP-N-acetyl-alpha-D-glucosamine-binding positions include 17 to 19 (TAG), Asn137, Arg179, Ser213, and Gln308.

It belongs to the glycosyltransferase 28 family. MurG subfamily.

It localises to the cell membrane. The enzyme catalyses di-trans,octa-cis-undecaprenyl diphospho-N-acetyl-alpha-D-muramoyl-L-alanyl-D-glutamyl-meso-2,6-diaminopimeloyl-D-alanyl-D-alanine + UDP-N-acetyl-alpha-D-glucosamine = di-trans,octa-cis-undecaprenyl diphospho-[N-acetyl-alpha-D-glucosaminyl-(1-&gt;4)]-N-acetyl-alpha-D-muramoyl-L-alanyl-D-glutamyl-meso-2,6-diaminopimeloyl-D-alanyl-D-alanine + UDP + H(+). It functions in the pathway cell wall biogenesis; peptidoglycan biosynthesis. Functionally, cell wall formation. Catalyzes the transfer of a GlcNAc subunit on undecaprenyl-pyrophosphoryl-MurNAc-pentapeptide (lipid intermediate I) to form undecaprenyl-pyrophosphoryl-MurNAc-(pentapeptide)GlcNAc (lipid intermediate II). The protein is UDP-N-acetylglucosamine--N-acetylmuramyl-(pentapeptide) pyrophosphoryl-undecaprenol N-acetylglucosamine transferase of Rhodococcus jostii (strain RHA1).